A 140-amino-acid polypeptide reads, in one-letter code: Histone H2B (140 aa).

Residues 1–10 (MPPKAAEKKP) are compositionally biased toward basic and acidic residues. The segment at 1-48 (MPPKAAEKKPSTGGKAPAGKAPAEKKEAGKKTAAAASGDKKKRGKTRK) is disordered. An N6-acetyllysine; alternate mark is found at Lys8 and Lys9. Residues Lys8 and Lys9 each participate in a glycyl lysine isopeptide (Lys-Gly) (interchain with G-Cter in SUMO); alternate cross-link. The segment covering 11–21 (STGGKAPAGKA) has biased composition (low complexity). N6-acetyllysine is present on Lys15. Lys25 carries the post-translational modification N6-acetyllysine; alternate. Lys25 is covalently cross-linked (Glycyl lysine isopeptide (Lys-Gly) (interchain with G-Cter in SUMO); alternate). Lys26 is covalently cross-linked (Glycyl lysine isopeptide (Lys-Gly) (interchain with G-Cter in SUMO)). Lys134 participates in a covalent cross-link: Glycyl lysine isopeptide (Lys-Gly) (interchain with G-Cter in ubiquitin).

The protein belongs to the histone H2B family. The nucleosome is a histone octamer containing two molecules each of H2A, H2B, H3 and H4 assembled in one H3-H4 heterotetramer and two H2A-H2B heterodimers. The octamer wraps approximately 147 bp of DNA. Post-translationally, monoubiquitinated by the ubc2-bre1 complex to form H2BK123ub1. H2BK123ub1 gives a specific tag for epigenetic transcriptional activation and is also prerequisite for H3K4me and H3K79me formation. H2BK123ub1 also modulates the formation of double-strand breaks during meiosis and is a prerequisite for DNA-damage checkpoint activation. In terms of processing, acetylated by gcn5 to form H2BK11ac and H2BK16ac. H2BK16ac can also be formed by esa1. Acetylation of N-terminal lysines and particularly formation of H2BK11acK16ac has a positive effect on transcription. Sumoylation to form H2BK6su or H2BK7su, and probably also H2BK16su or H2BK17su, occurs preferentially near the telomeres and represses gene transcription.

It is found in the nucleus. Its subcellular location is the chromosome. Functionally, core component of nucleosome. Nucleosomes wrap and compact DNA into chromatin, limiting DNA accessibility to the cellular machineries which require DNA as a template. Histones thereby play a central role in transcription regulation, DNA repair, DNA replication and chromosomal stability. DNA accessibility is regulated via a complex set of post-translational modifications of histones, also called histone code, and nucleosome remodeling. The sequence is that of Histone H2B (htb1) from Aspergillus clavatus (strain ATCC 1007 / CBS 513.65 / DSM 816 / NCTC 3887 / NRRL 1 / QM 1276 / 107).